Consider the following 676-residue polypeptide: UvrABC system protein B (676 aa).

The Helicase ATP-binding domain occupies 26–414 (EGLDAGLAHQ…SAGEIADQVV (389 aa)). 39–46 (GVTGSGKT) provides a ligand contact to ATP. A Beta-hairpin motif is present at residues 92-115 (YYDYYQPEAYVPTTDTFIEKDASV). The region spanning 432 to 598 (QVDDLLSEIR…ALKRNIKDIM (167 aa)) is the Helicase C-terminal domain. Residues 636–671 (EKEISRLEAAMYQHAQDLEFELAAEKRDEIEKLRAQ) form the UVR domain.

Belongs to the UvrB family. As to quaternary structure, forms a heterotetramer with UvrA during the search for lesions. Interacts with UvrC in an incision complex.

Its subcellular location is the cytoplasm. The UvrABC repair system catalyzes the recognition and processing of DNA lesions. A damage recognition complex composed of 2 UvrA and 2 UvrB subunits scans DNA for abnormalities. Upon binding of the UvrA(2)B(2) complex to a putative damaged site, the DNA wraps around one UvrB monomer. DNA wrap is dependent on ATP binding by UvrB and probably causes local melting of the DNA helix, facilitating insertion of UvrB beta-hairpin between the DNA strands. Then UvrB probes one DNA strand for the presence of a lesion. If a lesion is found the UvrA subunits dissociate and the UvrB-DNA preincision complex is formed. This complex is subsequently bound by UvrC and the second UvrB is released. If no lesion is found, the DNA wraps around the other UvrB subunit that will check the other stand for damage. This is UvrABC system protein B from Vibrio parahaemolyticus serotype O3:K6 (strain RIMD 2210633).